A 187-amino-acid polypeptide reads, in one-letter code: Large ribosomal subunit protein uL24c (187 aa).

Residues M1–A41 constitute a chloroplast transit peptide.

The protein belongs to the universal ribosomal protein uL24 family. In terms of assembly, part of the 50S ribosomal subunit.

It localises to the plastid. Its subcellular location is the chloroplast. Functionally, one of two assembly initiator proteins, it binds directly to the 5'-end of the 23S rRNA, where it nucleates assembly of the 50S subunit. The polypeptide is Large ribosomal subunit protein uL24c (RPL24) (Nicotiana tabacum (Common tobacco)).